A 306-amino-acid chain; its full sequence is Probable dimethyladenosine transferase (306 aa).

The S-adenosyl-L-methionine site is built by H30, L32, G57, E78, D106, and N121.

The protein belongs to the class I-like SAM-binding methyltransferase superfamily. rRNA adenine N(6)-methyltransferase family. As to quaternary structure, part of the small subunit (SSU) processome, composed of more than 70 proteins and the RNA chaperone small nucleolar RNA (snoRNA) U3.

The protein localises to the nucleus. It localises to the nucleolus. It carries out the reaction adenosine(1779)/adenosine(1780) in 18S rRNA + 4 S-adenosyl-L-methionine = N(6)-dimethyladenosine(1779)/N(6)-dimethyladenosine(1780) in 18S rRNA + 4 S-adenosyl-L-homocysteine + 4 H(+). Functionally, specifically dimethylates two adjacent adenosines in the loop of a conserved hairpin near the 3'-end of 18S rRNA in the 40S particle. Involved in the pre-rRNA processing steps leading to small-subunit rRNA production independently of its RNA-modifying catalytic activity. Part of the small subunit (SSU) processome, first precursor of the small eukaryotic ribosomal subunit. During the assembly of the SSU processome in the nucleolus, many ribosome biogenesis factors, an RNA chaperone and ribosomal proteins associate with the nascent pre-rRNA and work in concert to generate RNA folding, modifications, rearrangements and cleavage as well as targeted degradation of pre-ribosomal RNA by the RNA exosome. The chain is Probable dimethyladenosine transferase from Drosophila melanogaster (Fruit fly).